A 350-amino-acid polypeptide reads, in one-letter code: Protein RecA (350 aa).

67–74 is an ATP binding site; sequence GPESSGKT.

Belongs to the RecA family.

The protein resides in the cytoplasm. In terms of biological role, can catalyze the hydrolysis of ATP in the presence of single-stranded DNA, the ATP-dependent uptake of single-stranded DNA by duplex DNA, and the ATP-dependent hybridization of homologous single-stranded DNAs. It interacts with LexA causing its activation and leading to its autocatalytic cleavage. The chain is Protein RecA from Chlamydia caviae (strain ATCC VR-813 / DSM 19441 / 03DC25 / GPIC) (Chlamydophila caviae).